A 581-amino-acid polypeptide reads, in one-letter code: Glutamyl-tRNA reductase (581 aa).

Substrate-binding positions include 49–52, serine 109, 114–116, and glutamine 120; these read TCNR and EGQ. The Nucleophile role is filled by cysteine 50. NADP(+) is bound at residue 192-197; it reads GAGSMS. Residues 292–416 are insert; the sequence is PAVEDTAVQE…AEAPRPQPVL (125 aa).

This sequence belongs to the glutamyl-tRNA reductase family. Homodimer.

It catalyses the reaction (S)-4-amino-5-oxopentanoate + tRNA(Glu) + NADP(+) = L-glutamyl-tRNA(Glu) + NADPH + H(+). It participates in porphyrin-containing compound metabolism; protoporphyrin-IX biosynthesis; 5-aminolevulinate from L-glutamyl-tRNA(Glu): step 1/2. Functionally, catalyzes the NADPH-dependent reduction of glutamyl-tRNA(Glu) to glutamate 1-semialdehyde (GSA). This chain is Glutamyl-tRNA reductase, found in Streptomyces coelicolor (strain ATCC BAA-471 / A3(2) / M145).